The sequence spans 442 residues: O-methyltransferase pgmB (442 aa).

An S-adenosyl-L-methionine-binding site is contributed by D291. H341 acts as the Proton acceptor in catalysis.

Belongs to the class I-like SAM-binding methyltransferase superfamily. Cation-independent O-methyltransferase family.

The protein operates within pigment biosynthesis. It participates in secondary metabolite biosynthesis. In terms of biological role, O-methyltransferase; part of the gene cluster that mediates the biosynthesis of pleosporalin A, ascomycone A, as well as a third cryptic naphthoquinone derived pigment, all responsible for the coloration of conidia. Specifically methylates position C-6 of the pgmA product 3-acetonyl-1,6,8-trihydroxy-2-naphthaldehyde to yield fusarubinaldehyde. The pathway begins with the biosynthesis of the cyclized heptaketide 3-acetonyl-1,6,8-trihydroxy-2-naphthaldehyde by the NR-PKS pgmA. The C-6 hydroxyl group is further methylated by the O-methyltransferase pgmB to yield fusarubinaldehyde which is in turn oxidized by the cytochrome P450 monooxygenase pgmC at C-9. The C-1 hydroxyl group is then methylated spontaneously. Although pgmE, pgmD and pgmH are essential for the production of pleosporalin A, it is not the case for the 2 other final products and it remains difficult to assign a specific function to each enzyme. PgmF and pgmG seem not to be involved in pigment biosynthesis although they were regulated by the cluster-specific transcription factor pgmR. The chain is O-methyltransferase pgmB from Aspergillus terreus.